The primary structure comprises 458 residues: tRNA-2-methylthio-N(6)-dimethylallyladenosine synthase (458 aa).

The region spanning 15–134 (KKVFIKTYGC…LPELLEKAKQ (120 aa)) is the MTTase N-terminal domain. 6 residues coordinate [4Fe-4S] cluster: Cys24, Cys60, Cys97, Cys175, Cys179, and Cys182. One can recognise a Radical SAM core domain in the interval 161 to 395 (RKRGVSAFLT…LLLEQQNTFL (235 aa)). Residues 396–457 (RSKIGQKTDV…SNSFVGEMTN (62 aa)) enclose the TRAM domain.

Belongs to the methylthiotransferase family. MiaB subfamily. In terms of assembly, monomer. [4Fe-4S] cluster is required as a cofactor.

The protein localises to the cytoplasm. The enzyme catalyses N(6)-dimethylallyladenosine(37) in tRNA + (sulfur carrier)-SH + AH2 + 2 S-adenosyl-L-methionine = 2-methylsulfanyl-N(6)-dimethylallyladenosine(37) in tRNA + (sulfur carrier)-H + 5'-deoxyadenosine + L-methionine + A + S-adenosyl-L-homocysteine + 2 H(+). Catalyzes the methylthiolation of N6-(dimethylallyl)adenosine (i(6)A), leading to the formation of 2-methylthio-N6-(dimethylallyl)adenosine (ms(2)i(6)A) at position 37 in tRNAs that read codons beginning with uridine. The polypeptide is tRNA-2-methylthio-N(6)-dimethylallyladenosine synthase (Bartonella tribocorum (strain CIP 105476 / IBS 506)).